The primary structure comprises 274 residues: Sulfur carrier protein FdhD (274 aa).

Cys-121 serves as the catalytic Cysteine persulfide intermediate. A Mo-bis(molybdopterin guanine dinucleotide)-binding site is contributed by 258–263 (FSKPGR).

Belongs to the FdhD family.

It localises to the cytoplasm. Its function is as follows. Required for formate dehydrogenase (FDH) activity. Acts as a sulfur carrier protein that transfers sulfur from IscS to the molybdenum cofactor prior to its insertion into FDH. The chain is Sulfur carrier protein FdhD from Yersinia pseudotuberculosis serotype O:3 (strain YPIII).